Here is a 261-residue protein sequence, read N- to C-terminus: Intermembrane phospholipid transport system permease protein MlaE (261 aa).

The Cytoplasmic segment spans residues M1–Q12. A helical membrane pass occupies residues V13 to G33. Residues K34–H49 are Periplasmic-facing. The helical transmembrane segment at V50–L70 threads the bilayer. Residues G71–R147 are Cytoplasmic-facing. Residues F148 to W168 form a helical membrane-spanning segment. Residues G169–D198 are Periplasmic-facing. Residues I199 to F219 traverse the membrane as a helical segment. The Cytoplasmic segment spans residues N220–T238. The chain crosses the membrane as a helical span at residues V239 to G259. Topologically, residues A260–G261 are periplasmic.

It belongs to the MlaE permease family. The complex is composed of two ATP-binding proteins (MlaF), two transmembrane proteins (MlaE), two cytoplasmic solute-binding proteins (MlaB) and six periplasmic solute-binding proteins (MlaD).

It localises to the cell inner membrane. Functionally, part of the ABC transporter complex MlaFEDB, which is involved in a phospholipid transport pathway that maintains lipid asymmetry in the outer membrane by retrograde trafficking of phospholipids from the outer membrane to the inner membrane. Probably responsible for the translocation of the substrate across the membrane. This chain is Intermembrane phospholipid transport system permease protein MlaE, found in Haemophilus influenzae (strain ATCC 51907 / DSM 11121 / KW20 / Rd).